The following is a 381-amino-acid chain: E3 ubiquitin-protein ligase Fancl (381 aa).

Positions 110–293 are UBC-RWD region (URD); the sequence is NIYYDILALY…MFDLCYFPMP (184 aa). Residues 303–374 form an RING-CH-type; degenerate zinc finger; the sequence is EEDNEELRCN…PFCKAKLSTS (72 aa). Cysteine 311, cysteine 314, cysteine 329, cysteine 334, histidine 339, cysteine 342, cysteine 364, and cysteine 367 together coordinate Zn(2+).

Interacts (via C-terminus) with FANCI and Fancd2.

It localises to the nucleus. The catalysed reaction is S-ubiquitinyl-[E2 ubiquitin-conjugating enzyme]-L-cysteine + [acceptor protein]-L-lysine = [E2 ubiquitin-conjugating enzyme]-L-cysteine + N(6)-ubiquitinyl-[acceptor protein]-L-lysine.. It functions in the pathway protein modification; protein ubiquitination. Its function is as follows. Ubiquitin ligase protein that mediates monoubiquitination of Fancd2. Ubiquitination of Fancd2 is stimulated by ionising radiation. Together with Fancd2, and probably FANCI, involved in DNA repair of damage caused by agents that induce interstrand cross-links but not agents that cause double strand breaks. This is E3 ubiquitin-protein ligase Fancl from Drosophila melanogaster (Fruit fly).